A 416-amino-acid polypeptide reads, in one-letter code: Heat shock protein DDB_G0280215 (416 aa).

Residues 37-150 enclose the sHSP domain; that stretch reads SMDWGWKPRM…SQHISLFGRE (114 aa). Positions 216-235 are disordered; that stretch reads ETKERERRIRDTKGETEKKK.

The protein belongs to the small heat shock protein (HSP20) family.

In Dictyostelium discoideum (Social amoeba), this protein is Heat shock protein DDB_G0280215.